Reading from the N-terminus, the 464-residue chain is Protein FAM90A11 (464 aa).

Disordered stretches follow at residues 1 to 42 (MMAR…DPRL), 70 to 389 (PATL…HDGA), and 415 to 437 (HSPE…SEAP). 2 stretches are compositionally biased toward basic and acidic residues: residues 74–89 (GKKE…KPRV) and 97–114 (NKDK…DPQR). Residues 180–197 (LASLSPLRKASLSSSSSL) show a composition bias toward low complexity. Polar residues predominate over residues 341-356 (GPSTSPQMGRRTSAQV).

This sequence belongs to the FAM90 family.

The chain is Protein FAM90A11 from Homo sapiens (Human).